The sequence spans 617 residues: tRNA uridine 5-carboxymethylaminomethyl modification enzyme MnmG (617 aa).

Residues 9 to 14 (GAGHAG), V121, and T176 contribute to the FAD site. Residue 269 to 283 (GPRYCPSIEDKFVRF) participates in NAD(+) binding. Q366 contacts FAD.

Belongs to the MnmG family. Homodimer. Heterotetramer of two MnmE and two MnmG subunits. Requires FAD as cofactor.

It is found in the cytoplasm. In terms of biological role, NAD-binding protein involved in the addition of a carboxymethylaminomethyl (cmnm) group at the wobble position (U34) of certain tRNAs, forming tRNA-cmnm(5)s(2)U34. This chain is tRNA uridine 5-carboxymethylaminomethyl modification enzyme MnmG, found in Acholeplasma laidlawii (strain PG-8A).